The primary structure comprises 459 residues: Bifunctional protein GlmU (459 aa).

The segment at 1–228 (MNFKAIILAA…IEELMGVNSR (228 aa)) is pyrophosphorylase. UDP-N-acetyl-alpha-D-glucosamine-binding positions include 8 to 11 (LAAG), lysine 22, glutamine 72, and 77 to 78 (GT). Aspartate 101 is a Mg(2+) binding site. UDP-N-acetyl-alpha-D-glucosamine is bound by residues glycine 138, glutamate 153, asparagine 168, and asparagine 226. Asparagine 226 serves as a coordination point for Mg(2+). The segment at 229-249 (VELSKAEEIMRRRINESHMVN) is linker. Positions 250-459 (GVTIIDTNST…KKNQKDDQSK (210 aa)) are N-acetyltransferase. The UDP-N-acetyl-alpha-D-glucosamine site is built by arginine 331 and lysine 349. Histidine 361 acts as the Proton acceptor in catalysis. UDP-N-acetyl-alpha-D-glucosamine is bound by residues tyrosine 364 and asparagine 375. Residues 384–385 (NY), serine 403, threonine 421, and arginine 438 each bind acetyl-CoA.

In the N-terminal section; belongs to the N-acetylglucosamine-1-phosphate uridyltransferase family. It in the C-terminal section; belongs to the transferase hexapeptide repeat family. In terms of assembly, homotrimer. Requires Mg(2+) as cofactor.

The protein localises to the cytoplasm. It carries out the reaction alpha-D-glucosamine 1-phosphate + acetyl-CoA = N-acetyl-alpha-D-glucosamine 1-phosphate + CoA + H(+). It catalyses the reaction N-acetyl-alpha-D-glucosamine 1-phosphate + UTP + H(+) = UDP-N-acetyl-alpha-D-glucosamine + diphosphate. Its pathway is nucleotide-sugar biosynthesis; UDP-N-acetyl-alpha-D-glucosamine biosynthesis; N-acetyl-alpha-D-glucosamine 1-phosphate from alpha-D-glucosamine 6-phosphate (route II): step 2/2. The protein operates within nucleotide-sugar biosynthesis; UDP-N-acetyl-alpha-D-glucosamine biosynthesis; UDP-N-acetyl-alpha-D-glucosamine from N-acetyl-alpha-D-glucosamine 1-phosphate: step 1/1. It participates in bacterial outer membrane biogenesis; LPS lipid A biosynthesis. Catalyzes the last two sequential reactions in the de novo biosynthetic pathway for UDP-N-acetylglucosamine (UDP-GlcNAc). The C-terminal domain catalyzes the transfer of acetyl group from acetyl coenzyme A to glucosamine-1-phosphate (GlcN-1-P) to produce N-acetylglucosamine-1-phosphate (GlcNAc-1-P), which is converted into UDP-GlcNAc by the transfer of uridine 5-monophosphate (from uridine 5-triphosphate), a reaction catalyzed by the N-terminal domain. The chain is Bifunctional protein GlmU from Clostridioides difficile (strain 630) (Peptoclostridium difficile).